A 269-amino-acid polypeptide reads, in one-letter code: Rhamnulose-1-phosphate aldolase (269 aa).

Glu119 is a catalytic residue. Zn(2+)-binding residues include His142, His144, and His214.

This sequence belongs to the aldolase class II family. RhaD subfamily. Zn(2+) serves as cofactor.

The protein resides in the cytoplasm. It catalyses the reaction L-rhamnulose 1-phosphate = (S)-lactaldehyde + dihydroxyacetone phosphate. The protein operates within carbohydrate degradation; L-rhamnose degradation; glycerone phosphate from L-rhamnose: step 3/3. Functionally, catalyzes the reversible cleavage of L-rhamnulose-1-phosphate to dihydroxyacetone phosphate (DHAP) and L-lactaldehyde. This chain is Rhamnulose-1-phosphate aldolase, found in Bacteroides thetaiotaomicron (strain ATCC 29148 / DSM 2079 / JCM 5827 / CCUG 10774 / NCTC 10582 / VPI-5482 / E50).